A 401-amino-acid polypeptide reads, in one-letter code: Calreticulin (401 aa).

Residues 1 to 18 (MRKELWLGLLLSSQAVLS) form the signal peptide. Cysteine 103 and cysteine 134 are disulfide-bonded. Positions 107, 109, 125, and 132 each coordinate an alpha-D-glucoside. 7 repeat units span residues 187-198 (KESGTLEEDWEI), 206-217 (DPEDKKPADWVD), 223-234 (DPEDKKPEDWDK), 241-252 (DPDATQPDDWDE), 256-266 (GKWEAPMISNP), 270-280 (GEWKAKKIPNP), and 284-294 (GVWKPRDIPNP). Positions 187–252 (KESGTLEEDW…DATQPDDWDE (66 aa)) are 4 X approximate repeats. 2 stretches are compositionally biased toward basic and acidic residues: residues 199-214 (LKPK…KPAD) and 224-236 (PEDK…DKEP). The tract at residues 199–263 (LKPKTIPDPE…EDGKWEAPMI (65 aa)) is disordered. Residues 246–256 (QPDDWDEEEDG) show a composition bias toward acidic residues. The tract at residues 256–294 (GKWEAPMISNPKYKGEWKAKKIPNPAYKGVWKPRDIPNP) is 3 X approximate repeats. Aspartate 314 provides a ligand contact to an alpha-D-glucoside. The disordered stretch occupies residues 341-401 (DQTNGATKDA…EEEDDKKDEL (61 aa)). Positions 348 to 381 (KDAEKKAFDSAEADKRKKEEDERKKQEEEEKKTA) are enriched in basic and acidic residues. Acidic residues predominate over residues 382-401 (EEDEDDDDEEEEEDDKKDEL). A Prevents secretion from ER motif is present at residues 398-401 (KDEL).

This sequence belongs to the calreticulin family.

It localises to the endoplasmic reticulum lumen. In terms of biological role, molecular calcium-binding chaperone promoting folding, oligomeric assembly and quality control in the ER via the calreticulin/calnexin cycle. This lectin may interact transiently with almost all of the monoglucosylated glycoproteins that are synthesized in the ER. The protein is Calreticulin of Euglena gracilis.